The primary structure comprises 324 residues: Zinc transporter ZIP1 (324 aa).

At 1–30 (MGPWGEPELLVWRPEAAASEAPVPMGLEVK) the chain is on the extracellular side. A helical membrane pass occupies residues 31–51 (LGALVLLLVLTLICSLVPVCV). Residues 52 to 68 (LRRPGANPEASASRQKA) lie on the Cytoplasmic side of the membrane. A helical transmembrane segment spans residues 69-89 (LSLVSCFAGGVFLATCLLDLL). At 90 to 104 (PDYLGAIDEALAALH) the chain is on the extracellular side. A helical transmembrane segment spans residues 105-125 (VTLQFPLQEFILAMGFFLVLV). Over 126-179 (MEQITLAYKEQSGPPPREETRALLGTVNGGPQHWHDGLGVPQAGGASSAPSALR) the chain is Cytoplasmic. Residues 180 to 200 (ACVLVFSLALHSVFEGLAVGL) form a helical membrane-spanning segment. Over 201–206 (QRDQAR) the chain is Extracellular. A helical transmembrane segment spans residues 207 to 227 (AMELCLALLLHKGILAVSLSL). Residues 228–237 (RLLQSHLRAQ) are Cytoplasmic-facing. A helical transmembrane segment spans residues 238 to 258 (VVAGCGILFSCMTPLGIGLGT). The Extracellular portion of the chain corresponds to 259 to 272 (ALAESAGPLHQLAQ). The chain crosses the membrane as a helical span at residues 273–293 (SVLEGMAAGTFLYITFLEILP). Residues 294-303 (QELATSEQRI) are Cytoplasmic-facing. The chain crosses the membrane as a helical span at residues 304–324 (LKVILLLAGFALLTGLLFIQI).

This sequence belongs to the ZIP transporter (TC 2.A.5) family.

The protein resides in the cell membrane. Its subcellular location is the endoplasmic reticulum membrane. It catalyses the reaction Zn(2+)(in) = Zn(2+)(out). In terms of biological role, transporter for the divalent cation Zn(2+). Mediates the influx of Zn(2+) into cells from extracellular space. This is Zinc transporter ZIP1 (SLC39A1) from Bos taurus (Bovine).